A 154-amino-acid chain; its full sequence is Ribonuclease H (154 aa).

Residues 1–142 (MLKQITLYTD…CDELARNAAL (142 aa)) enclose the RNase H type-1 domain. Residues aspartate 10, glutamate 48, aspartate 70, and aspartate 134 each coordinate Mg(2+).

Belongs to the RNase H family. Monomer. The cofactor is Mg(2+).

It is found in the cytoplasm. The catalysed reaction is Endonucleolytic cleavage to 5'-phosphomonoester.. In terms of biological role, endonuclease that specifically degrades the RNA of RNA-DNA hybrids. The chain is Ribonuclease H from Tolumonas auensis (strain DSM 9187 / NBRC 110442 / TA 4).